The primary structure comprises 247 residues: Cytochrome c oxidase subunit 2 (247 aa).

The Mitochondrial intermembrane portion of the chain corresponds to M1–N38. The chain crosses the membrane as a helical span at residues V39–L58. Residues T59 to E78 lie on the Mitochondrial matrix side of the membrane. Residues M79–C103 form a helical membrane-spanning segment. Over D104 to Q247 the chain is Mitochondrial intermembrane. Cu cation-binding residues include H182, C217, E219, C221, H225, and M228. E219 contributes to the Mg(2+) binding site.

The protein belongs to the cytochrome c oxidase subunit 2 family. Component of the cytochrome c oxidase (complex IV, CIV), a multisubunit enzyme composed of a catalytic core of 3 subunits and several supernumerary subunits. The complex exists as a monomer or a dimer and forms supercomplexes (SCs) in the inner mitochondrial membrane with ubiquinol-cytochrome c oxidoreductase (cytochrome b-c1 complex, complex III, CIII). Cu cation is required as a cofactor.

It localises to the mitochondrion inner membrane. It carries out the reaction 4 Fe(II)-[cytochrome c] + O2 + 8 H(+)(in) = 4 Fe(III)-[cytochrome c] + 2 H2O + 4 H(+)(out). Functionally, component of the cytochrome c oxidase, the last enzyme in the mitochondrial electron transport chain which drives oxidative phosphorylation. The respiratory chain contains 3 multisubunit complexes succinate dehydrogenase (complex II, CII), ubiquinol-cytochrome c oxidoreductase (cytochrome b-c1 complex, complex III, CIII) and cytochrome c oxidase (complex IV, CIV), that cooperate to transfer electrons derived from NADH and succinate to molecular oxygen, creating an electrochemical gradient over the inner membrane that drives transmembrane transport and the ATP synthase. Cytochrome c oxidase is the component of the respiratory chain that catalyzes the reduction of oxygen to water. Electrons originating from reduced cytochrome c in the intermembrane space (IMS) are transferred via the dinuclear copper A center (CU(A)) of subunit 2 and heme A of subunit 1 to the active site in subunit 1, a binuclear center (BNC) formed by heme A3 and copper B (CU(B)). The BNC reduces molecular oxygen to 2 water molecules using 4 electrons from cytochrome c in the IMS and 4 protons from the mitochondrial matrix. This chain is Cytochrome c oxidase subunit 2 (COX2), found in Brettanomyces custersianus (Yeast).